Consider the following 437-residue polypeptide: 26S proteasome subunit RPT4 (437 aa).

The interval 1 to 51 is disordered; that stretch reads MSEEQDPLLAGLGETSGDNHTQQSHEQQPEQPQETEEHHEEEPSRVDPEQE. N-acetylserine is present on Ser2. Residues 20–32 show a composition bias toward low complexity; the sequence is HTQQSHEQQPEQP. The span at 35–51 shows a compositional bias: basic and acidic residues; that stretch reads TEEHHEEEPSRVDPEQE. 222–229 is a binding site for ATP; the sequence is GPPGTGKT.

Belongs to the AAA ATPase family. In terms of processing, N-acetylated by NAT1.

Functionally, the 26S proteasome is involved in the ATP-dependent degradation of ubiquitinated proteins. The regulatory (or ATPase) complex confers ATP dependency and substrate specificity to the 26S complex. In Saccharomyces cerevisiae (strain ATCC 204508 / S288c) (Baker's yeast), this protein is 26S proteasome subunit RPT4 (RPT4).